The sequence spans 61 residues: Metallothionein-1A (61 aa).

Position 1 is an N-acetylmethionine (Met1). A beta region spans residues 1-29 (MDPNCSCPTGGSCSCAGSCTCKACRCTSC). Residues Cys5, Cys7, Cys13, Cys15, Cys19, Cys21, Cys24, Cys26, Cys29, Cys33, Cys34, Cys36, Cys37, Cys41, Cys44, Cys48, Cys50, and Cys57 each contribute to the a divalent metal cation site. The segment at 30-61 (KKSCCSCCPAGCARCAQGCICKGASDKCSCCA) is alpha. Position 58 is a phosphoserine (Ser58). 2 residues coordinate a divalent metal cation: Cys59 and Cys60.

This sequence belongs to the metallothionein superfamily. Type 1 family. In terms of assembly, monomer.

Metallothioneins have a high content of cysteine residues that bind various heavy metals; these proteins are transcriptionally regulated by both heavy metals and glucocorticoids. The polypeptide is Metallothionein-1A (MT1A) (Sus scrofa (Pig)).